A 1026-amino-acid chain; its full sequence is Multidrug resistance protein MdtC (1026 aa).

A run of 11 helical transmembrane segments spans residues 15–35 (ILIA…LPVA), 333–353 (EVEE…FLFL), 360–380 (LIPA…MYLC), 387–407 (LSLM…IVVL), 431–451 (VGFT…PLLL), 463–483 (FAVT…TLTP), 528–548 (LVGV…IAIP), 853–873 (LILI…LYES), 897–917 (LFNA…IGIV), 953–973 (PIMM…LSDG), and 984–1004 (ITIV…TPVV).

It belongs to the resistance-nodulation-cell division (RND) (TC 2.A.6) family. MdtC subfamily. Part of a tripartite efflux system composed of MdtA, MdtB and MdtC. MdtC forms a heteromultimer with MdtB.

The protein resides in the cell inner membrane. In Salmonella paratyphi B (strain ATCC BAA-1250 / SPB7), this protein is Multidrug resistance protein MdtC.